A 630-amino-acid polypeptide reads, in one-letter code: MITGRDIYDVLAAIVPLYVAMFLAYGSVRWWGIFTPDQCSGINRFVAVFAVPLLSFHFISTNDPYSMNYRFLAADSLQKLVILAALAVWHNLLSRYRRNGGAAASLDWTITLFSLSTLPNTLVMGIPLLRAMYGDFSGSLMVQIVVLQSVIWYTLMLFLFEYRGAKALISEQFPPDVGASIASFRVDSDVVSLNGREALQADAEVGRDGRVHVVIRRSASASTTGGGGGAARSGVSRAYGASNAMTPRASNLTGVEIYSLQTSREPTPRASSFNQADFYAMFSGSKMASQMASPMAQHGGAGGRAQGLDEQVTNKFASGKAADPPSYPAPNPGMMPAPRKKELGGSNSNSNKELHMFVWSSSASPVSEANLRNAVNHAASTDFASAPPPAAVPVGGATPKGVSGSVTPAAKNGGGELEIEDGLKSPAAGLAAKFPVSGSPYVAPRKKGGGADVPGLAEAAHPMPPTSVMTRLILIMVWRKLIRNPNTYSSLIGLVWSLVSFRWNIQMPSIIKGSISILSDAGLGMAMFSLGLFMALQPKIISCGKTVATFAMAVRFLTGPAVIAATSIAIGLRGVLLHVAIVQAALPQGIVPFVFAKEYNCHPQILSTAVIFGMLIALPITILYYVLLGI.

The Extracellular portion of the chain corresponds to 1-6 (MITGRD). A helical transmembrane segment spans residues 7 to 27 (IYDVLAAIVPLYVAMFLAYGS). At 28–38 (VRWWGIFTPDQ) the chain is on the cytoplasmic side. A helical transmembrane segment spans residues 39–59 (CSGINRFVAVFAVPLLSFHFI). A (indol-3-yl)acetate-binding site is contributed by valine 51. The Extracellular segment spans residues 60–70 (STNDPYSMNYR). Residues 71–91 (FLAADSLQKLVILAALAVWHN) form a helical membrane-spanning segment. At 92 to 108 (LLSRYRRNGGAAASLDW) the chain is on the cytoplasmic side. A helical membrane pass occupies residues 109 to 129 (TITLFSLSTLPNTLVMGIPLL). Residues asparagine 120 and leucine 122 each contribute to the (indol-3-yl)acetate site. At 130–139 (RAMYGDFSGS) the chain is on the extracellular side. Residues 140–160 (LMVQIVVLQSVIWYTLMLFLF) traverse the membrane as a helical segment. Residue tyrosine 153 participates in (indol-3-yl)acetate binding. The Cytoplasmic segment spans residues 161 to 490 (EYRGAKALIS…LIRNPNTYSS (330 aa)). A disordered region spans residues 317–350 (ASGKAADPPSYPAPNPGMMPAPRKKELGGSNSNS). Pro residues predominate over residues 325-335 (PSYPAPNPGMM). Residues 491–511 (LIGLVWSLVSFRWNIQMPSII) traverse the membrane as a helical segment. Over 512 to 514 (KGS) the chain is Extracellular. The chain crosses the membrane as a helical span at residues 515–535 (ISILSDAGLGMAMFSLGLFMA). The Cytoplasmic portion of the chain corresponds to 536-549 (LQPKIISCGKTVAT). Residues 550-570 (FAMAVRFLTGPAVIAATSIAI) traverse the membrane as a helical segment. The Extracellular segment spans residues 571 to 574 (GLRG). Residues 575 to 595 (VLLHVAIVQAALPQGIVPFVF) traverse the membrane as a helical segment. Residues isoleucine 590 and valine 591 each contribute to the (indol-3-yl)acetate site. Residues 596–609 (AKEYNCHPQILSTA) lie on the Cytoplasmic side of the membrane. The chain crosses the membrane as a helical span at residues 610–630 (VIFGMLIALPITILYYVLLGI).

Belongs to the auxin efflux carrier (TC 2.A.69.1) family. In terms of assembly, homodimer. As to expression, expressed in roots, leaves, shoot apex and panicles. Expressed in roots, stem bases and young panicles.

It localises to the membrane. Functionally, acts as a component of the auxin efflux carrier. Involved in the basipetal polar auxin transport which contributes to the spreading growth of the tillers. The protein is Auxin efflux carrier component 2 of Oryza sativa subsp. japonica (Rice).